The sequence spans 793 residues: Probable serine/threonine-protein kinase fnkA (793 aa).

The Protein kinase domain maps to 11 to 358 (WEILSQLGTG…IINLISHNFI (348 aa)). ATP is bound by residues 17-25 (LGTGAFGRV) and Lys46. Asp138 acts as the Proton acceptor in catalysis. FNIP repeat units lie at residues 403-444 (FNQT…FGAR), 470-514 (YNQP…ILGD), 515-557 (YDQK…LGYR), 558-601 (FNKA…LGYC), and 691-733 (FIRP…LGSR).

This sequence belongs to the protein kinase superfamily. STE Ser/Thr protein kinase family. The cofactor is Mg(2+).

It carries out the reaction L-seryl-[protein] + ATP = O-phospho-L-seryl-[protein] + ADP + H(+). The catalysed reaction is L-threonyl-[protein] + ATP = O-phospho-L-threonyl-[protein] + ADP + H(+). The polypeptide is Probable serine/threonine-protein kinase fnkA (Dictyostelium discoideum (Social amoeba)).